A 578-amino-acid polypeptide reads, in one-letter code: Probable cytochrome c oxidase subunit 1-alpha (578 aa).

The tract at residues Met-1–Leu-21 is disordered. The chain crosses the membrane as a helical span at residues Ile-44 to Leu-64. His-90 serves as a coordination point for Fe(II)-heme a. The next 6 membrane-spanning stretches (helical) occupy residues Ile-93–Leu-113, Leu-125–Leu-145, Leu-174–Ile-194, Val-217–Ala-237, Leu-262–Val-282, and Ile-294–Val-314. Cu cation-binding residues include His-268 and Tyr-272. The segment at residues His-268–Tyr-272 is a cross-link (1'-histidyl-3'-tyrosine (His-Tyr)). The Cu cation site is built by His-317 and His-318. 2 helical membrane passes run Met-319–Val-339 and Met-363–Leu-383. Residue His-401 participates in heme a3 binding. A run of 3 helical transmembrane segments spans residues Phe-402–Trp-422, Ile-437–Gly-457, and Ile-480–Trp-500. Fe(II)-heme a is bound at residue His-403.

Belongs to the heme-copper respiratory oxidase family. Associates with subunits II, III and IV to form cytochrome c oxidase. Requires Cu(2+) as cofactor. It depends on heme as a cofactor.

The protein localises to the cell membrane. It catalyses the reaction 4 Fe(II)-[cytochrome c] + O2 + 8 H(+)(in) = 4 Fe(III)-[cytochrome c] + 2 H2O + 4 H(+)(out). It functions in the pathway energy metabolism; oxidative phosphorylation. In terms of biological role, cytochrome c oxidase is the component of the respiratory chain that catalyzes the reduction of oxygen to water. Subunits 1-3 form the functional core of the enzyme complex. CO I is the catalytic subunit of the enzyme. Electrons originating in cytochrome c are transferred via the copper A center of subunit 2 and heme A of subunit 1 to the bimetallic center formed by heme A3 and copper B. The chain is Probable cytochrome c oxidase subunit 1-alpha (ctaD1) from Streptomyces coelicolor (strain ATCC BAA-471 / A3(2) / M145).